The sequence spans 60 residues: Putative mercuric resistance protein (60 aa).

This Shigella flexneri protein is Putative mercuric resistance protein.